The chain runs to 495 residues: Bifunctional protein GlmU (495 aa).

A pyrophosphorylase region spans residues 1-241; sequence MPQQTAVVVL…AAKVTGVNDR (241 aa). UDP-N-acetyl-alpha-D-glucosamine-binding positions include 10-13, lysine 24, glutamine 81, and 86-87; these read LAAG and GT. Aspartate 112 serves as a coordination point for Mg(2+). Residues glycine 151, glutamate 166, asparagine 181, and asparagine 239 each contribute to the UDP-N-acetyl-alpha-D-glucosamine site. Asparagine 239 contacts Mg(2+). The tract at residues 242-262 is linker; it reads VQLSIATRTMNRYILERHMRA. The N-acetyltransferase stretch occupies residues 263 to 495; that stretch reads GVTIIDPAST…QATEQKDGEQ (233 aa). Residues arginine 344 and lysine 362 each coordinate UDP-N-acetyl-alpha-D-glucosamine. The active-site Proton acceptor is histidine 374. UDP-N-acetyl-alpha-D-glucosamine contacts are provided by tyrosine 377 and asparagine 388. Residues alanine 391, 397 to 398, serine 416, and alanine 434 contribute to the acetyl-CoA site; that span reads NY. The interval 467–495 is disordered; the sequence is GTAAATAAAQALAADEKSSQATEQKDGEQ. Residues 468–479 are compositionally biased toward low complexity; it reads TAAATAAAQALA. Basic and acidic residues predominate over residues 480-495; it reads ADEKSSQATEQKDGEQ.

This sequence in the N-terminal section; belongs to the N-acetylglucosamine-1-phosphate uridyltransferase family. In the C-terminal section; belongs to the transferase hexapeptide repeat family. As to quaternary structure, homotrimer. Mg(2+) serves as cofactor.

Its subcellular location is the cytoplasm. The enzyme catalyses alpha-D-glucosamine 1-phosphate + acetyl-CoA = N-acetyl-alpha-D-glucosamine 1-phosphate + CoA + H(+). It catalyses the reaction N-acetyl-alpha-D-glucosamine 1-phosphate + UTP + H(+) = UDP-N-acetyl-alpha-D-glucosamine + diphosphate. The protein operates within nucleotide-sugar biosynthesis; UDP-N-acetyl-alpha-D-glucosamine biosynthesis; N-acetyl-alpha-D-glucosamine 1-phosphate from alpha-D-glucosamine 6-phosphate (route II): step 2/2. It participates in nucleotide-sugar biosynthesis; UDP-N-acetyl-alpha-D-glucosamine biosynthesis; UDP-N-acetyl-alpha-D-glucosamine from N-acetyl-alpha-D-glucosamine 1-phosphate: step 1/1. Its pathway is bacterial outer membrane biogenesis; LPS lipid A biosynthesis. Functionally, catalyzes the last two sequential reactions in the de novo biosynthetic pathway for UDP-N-acetylglucosamine (UDP-GlcNAc). The C-terminal domain catalyzes the transfer of acetyl group from acetyl coenzyme A to glucosamine-1-phosphate (GlcN-1-P) to produce N-acetylglucosamine-1-phosphate (GlcNAc-1-P), which is converted into UDP-GlcNAc by the transfer of uridine 5-monophosphate (from uridine 5-triphosphate), a reaction catalyzed by the N-terminal domain. The chain is Bifunctional protein GlmU from Nocardia farcinica (strain IFM 10152).